Consider the following 131-residue polypeptide: Small ribosomal subunit protein uS8 (131 aa).

Belongs to the universal ribosomal protein uS8 family. In terms of assembly, part of the 30S ribosomal subunit. Contacts proteins S5 and S12.

Functionally, one of the primary rRNA binding proteins, it binds directly to 16S rRNA central domain where it helps coordinate assembly of the platform of the 30S subunit. The polypeptide is Small ribosomal subunit protein uS8 (Acinetobacter baylyi (strain ATCC 33305 / BD413 / ADP1)).